The sequence spans 452 residues: Exodeoxyribonuclease 7 large subunit (452 aa).

Belongs to the XseA family. In terms of assembly, heterooligomer composed of large and small subunits.

The protein resides in the cytoplasm. The catalysed reaction is Exonucleolytic cleavage in either 5'- to 3'- or 3'- to 5'-direction to yield nucleoside 5'-phosphates.. Its function is as follows. Bidirectionally degrades single-stranded DNA into large acid-insoluble oligonucleotides, which are then degraded further into small acid-soluble oligonucleotides. This chain is Exodeoxyribonuclease 7 large subunit, found in Bordetella avium (strain 197N).